Here is a 182-residue protein sequence, read N- to C-terminus: Protein OPG192 (182 aa).

Belongs to the orthopoxvirus OPG192 family.

The protein resides in the host endoplasmic reticulum. This is Protein OPG192 (OPG192) from Cynomys gunnisoni (Gunnison's prairie dog).